A 560-amino-acid chain; its full sequence is Dihydroxy-acid dehydratase (560 aa).

Residue Asp80 coordinates Mg(2+). Cys121 is a [2Fe-2S] cluster binding site. The Mg(2+) site is built by Asp122 and Lys123. N6-carboxylysine is present on Lys123. Cys194 is a binding site for [2Fe-2S] cluster. Glu447 lines the Mg(2+) pocket. The Proton acceptor role is filled by Ser473.

Belongs to the IlvD/Edd family. As to quaternary structure, homodimer. [2Fe-2S] cluster is required as a cofactor. Requires Mg(2+) as cofactor.

It catalyses the reaction (2R)-2,3-dihydroxy-3-methylbutanoate = 3-methyl-2-oxobutanoate + H2O. The enzyme catalyses (2R,3R)-2,3-dihydroxy-3-methylpentanoate = (S)-3-methyl-2-oxopentanoate + H2O. Its pathway is amino-acid biosynthesis; L-isoleucine biosynthesis; L-isoleucine from 2-oxobutanoate: step 3/4. It participates in amino-acid biosynthesis; L-valine biosynthesis; L-valine from pyruvate: step 3/4. Its function is as follows. Functions in the biosynthesis of branched-chain amino acids. Catalyzes the dehydration of (2R,3R)-2,3-dihydroxy-3-methylpentanoate (2,3-dihydroxy-3-methylvalerate) into 2-oxo-3-methylpentanoate (2-oxo-3-methylvalerate) and of (2R)-2,3-dihydroxy-3-methylbutanoate (2,3-dihydroxyisovalerate) into 2-oxo-3-methylbutanoate (2-oxoisovalerate), the penultimate precursor to L-isoleucine and L-valine, respectively. The chain is Dihydroxy-acid dehydratase from Chlorobaculum tepidum (strain ATCC 49652 / DSM 12025 / NBRC 103806 / TLS) (Chlorobium tepidum).